Reading from the N-terminus, the 158-residue chain is Cyclic pyranopterin monophosphate synthase (158 aa).

Residues 75–77 (LCH) and 113–114 (ME) contribute to the substrate site. D128 is an active-site residue.

This sequence belongs to the MoaC family. Homohexamer; trimer of dimers.

The catalysed reaction is (8S)-3',8-cyclo-7,8-dihydroguanosine 5'-triphosphate = cyclic pyranopterin phosphate + diphosphate. Its pathway is cofactor biosynthesis; molybdopterin biosynthesis. In terms of biological role, catalyzes the conversion of (8S)-3',8-cyclo-7,8-dihydroguanosine 5'-triphosphate to cyclic pyranopterin monophosphate (cPMP). The protein is Cyclic pyranopterin monophosphate synthase of Polynucleobacter asymbioticus (strain DSM 18221 / CIP 109841 / QLW-P1DMWA-1) (Polynucleobacter necessarius subsp. asymbioticus).